Reading from the N-terminus, the 161-residue chain is Pathogenesis-related protein 1 (161 aa).

Positions 1–26 (MNFTGYSRFLIVFVALVGALVLPSKA) are cleaved as a signal peptide. The SCP domain occupies 34–149 (LRVHNQARGA…NGGTIISCNY (116 aa)). Disulfide bonds link Cys70–Cys138, Cys113–Cys117, and Cys133–Cys147.

The protein belongs to the CRISP family.

It localises to the secreted. The protein resides in the extracellular space. Its subcellular location is the apoplast. Partially responsible for acquired pathogen resistance. This is Pathogenesis-related protein 1 from Arabidopsis thaliana (Mouse-ear cress).